Here is a 481-residue protein sequence, read N- to C-terminus: F-box protein At1g49360 (481 aa).

An F-box domain is found at 105–156; sequence LKEDLFLPSDLVRLILSRLSFKDNIRSSTVCKAWGDIAASVRVKSRRCWLLY.

This Arabidopsis thaliana (Mouse-ear cress) protein is F-box protein At1g49360.